The sequence spans 333 residues: Phosphoribosylformylglycinamidine cyclo-ligase (333 aa).

It belongs to the AIR synthase family.

The protein resides in the cytoplasm. The enzyme catalyses 2-formamido-N(1)-(5-O-phospho-beta-D-ribosyl)acetamidine + ATP = 5-amino-1-(5-phospho-beta-D-ribosyl)imidazole + ADP + phosphate + H(+). Its pathway is purine metabolism; IMP biosynthesis via de novo pathway; 5-amino-1-(5-phospho-D-ribosyl)imidazole from N(2)-formyl-N(1)-(5-phospho-D-ribosyl)glycinamide: step 2/2. The protein is Phosphoribosylformylglycinamidine cyclo-ligase of Methanosarcina mazei (strain ATCC BAA-159 / DSM 3647 / Goe1 / Go1 / JCM 11833 / OCM 88) (Methanosarcina frisia).